A 297-amino-acid polypeptide reads, in one-letter code: 4-hydroxy-tetrahydrodipicolinate synthase (297 aa).

Residue Thr-49 coordinates pyruvate. The active-site Proton donor/acceptor is the Tyr-137. Residue Lys-166 is the Schiff-base intermediate with substrate of the active site. Residue Ile-208 participates in pyruvate binding.

Belongs to the DapA family. In terms of assembly, homotetramer; dimer of dimers.

It localises to the cytoplasm. The catalysed reaction is L-aspartate 4-semialdehyde + pyruvate = (2S,4S)-4-hydroxy-2,3,4,5-tetrahydrodipicolinate + H2O + H(+). It participates in amino-acid biosynthesis; L-lysine biosynthesis via DAP pathway; (S)-tetrahydrodipicolinate from L-aspartate: step 3/4. Catalyzes the condensation of (S)-aspartate-beta-semialdehyde [(S)-ASA] and pyruvate to 4-hydroxy-tetrahydrodipicolinate (HTPA). This chain is 4-hydroxy-tetrahydrodipicolinate synthase, found in Porphyromonas gingivalis (strain ATCC 33277 / DSM 20709 / CIP 103683 / JCM 12257 / NCTC 11834 / 2561).